The chain runs to 513 residues: tRNA-2-methylthio-N(6)-dimethylallyladenosine synthase (513 aa).

An MTTase N-terminal domain is found at 67–185 (KTFLIKTYGC…LPEILEEAYL (119 aa)). Residues Cys-76, Cys-112, Cys-146, Cys-222, Cys-226, and Cys-229 each contribute to the [4Fe-4S] cluster site. One can recognise a Radical SAM core domain in the interval 208-438 (REGNIKAWVN…NKKVACYSER (231 aa)). The 64-residue stretch at 441–504 (QQYEGQTVQV…QFSLNGTFIS (64 aa)) folds into the TRAM domain.

This sequence belongs to the methylthiotransferase family. MiaB subfamily. In terms of assembly, monomer. Requires [4Fe-4S] cluster as cofactor.

The protein resides in the cytoplasm. It carries out the reaction N(6)-dimethylallyladenosine(37) in tRNA + (sulfur carrier)-SH + AH2 + 2 S-adenosyl-L-methionine = 2-methylsulfanyl-N(6)-dimethylallyladenosine(37) in tRNA + (sulfur carrier)-H + 5'-deoxyadenosine + L-methionine + A + S-adenosyl-L-homocysteine + 2 H(+). In terms of biological role, catalyzes the methylthiolation of N6-(dimethylallyl)adenosine (i(6)A), leading to the formation of 2-methylthio-N6-(dimethylallyl)adenosine (ms(2)i(6)A) at position 37 in tRNAs that read codons beginning with uridine. The protein is tRNA-2-methylthio-N(6)-dimethylallyladenosine synthase of Staphylococcus saprophyticus subsp. saprophyticus (strain ATCC 15305 / DSM 20229 / NCIMB 8711 / NCTC 7292 / S-41).